We begin with the raw amino-acid sequence, 300 residues long: MKELIICNNIKLIKEEIHKKKIEISKRNNKEYYEIKVGFVPTMGYLHSGHISLVERAKLENDIVVVSIFVNPTQFNANEDLSSYPSDIENDSKLLKNVGTDLLFLPTPDIMYPKESGYSTFVTVESMEQVMEGKSRPGHFRGVATIVTKLLLITTPTNLYIGQKDAMQCICIKRLVADLNIDTNVIICNTIREDTGLAKSSRNSYLSNEEQIQASSIYKILESFKNNINSFTDRQSFINEITKQLEQNPLFKVEYVSIASNITGLEIIDQFPPPKDSNLSLALLFFAEKRKTRLIDIIIL.

43–50 (MGYLHSGH) is an ATP binding site. The active-site Proton donor is His50. Gln74 is a binding site for (R)-pantoate. Gln74 contacts beta-alanine. 162 to 165 (GQKD) provides a ligand contact to ATP. Residue Gln168 coordinates (R)-pantoate. ATP contacts are provided by residues Ile191 and 199-202 (KSSR).

Belongs to the pantothenate synthetase family. Homodimer.

It localises to the cytoplasm. It catalyses the reaction (R)-pantoate + beta-alanine + ATP = (R)-pantothenate + AMP + diphosphate + H(+). It participates in cofactor biosynthesis; (R)-pantothenate biosynthesis; (R)-pantothenate from (R)-pantoate and beta-alanine: step 1/1. Catalyzes the condensation of pantoate with beta-alanine in an ATP-dependent reaction via a pantoyl-adenylate intermediate. The sequence is that of Pantoate--beta-alanine ligase (panC) from Dictyostelium discoideum (Social amoeba).